The following is a 291-amino-acid chain: MTTLAIDIGGTKLAAALIDNNLRISQRRELPTPASKTPDALREALKALVEPLRAEARQVAIASTGIIQEGMLLALNPHNLGGLLHFPLVQTLEAIAGLPTLAVNDAQAAAWAEYHALPDDIRDMVFITVSTGVGGGVVCDGKLLTGKGGLAGHLGHTLADPHGPVCGCGRVGCVEAIASGRGMAAAARDDLAGCDAKTLFIRAGEGHQQARHLVSQSAQVIARMIADVKATTDCQCVVIGGSVGLAEGYLEQVRAFLMQEPAPYHVALSAARYRHDAGLLGAALLAQGDTL.

ATP is bound by residues 5–12 and 132–139; these read AIDIGGTK and GVGGGVVC. Zn(2+) is bound by residues His-156, Cys-166, Cys-168, and Cys-173.

It belongs to the ROK (NagC/XylR) family. NanK subfamily. Homodimer.

It catalyses the reaction an N-acyl-D-mannosamine + ATP = an N-acyl-D-mannosamine 6-phosphate + ADP + H(+). It functions in the pathway amino-sugar metabolism; N-acetylneuraminate degradation; D-fructose 6-phosphate from N-acetylneuraminate: step 2/5. In terms of biological role, catalyzes the phosphorylation of N-acetylmannosamine (ManNAc) to ManNAc-6-P. The sequence is that of N-acetylmannosamine kinase from Salmonella paratyphi A (strain ATCC 9150 / SARB42).